A 94-amino-acid chain; its full sequence is MPRRSIWKGSFVDAFLLRMKKKRDLLFNRKIWSRRSSILPEFVDCFVRIYNGKTFVRCKITEGKVGHKFGEFAFTRKRRPSRTNIGPGRKRGKK.

Belongs to the universal ribosomal protein uS19 family.

The protein localises to the mitochondrion. This chain is Small ribosomal subunit protein uS19m (RPS19), found in Petunia hybrida (Petunia).